Here is a 186-residue protein sequence, read N- to C-terminus: Elongation factor P (186 aa).

The protein belongs to the elongation factor P family.

The protein resides in the cytoplasm. Its pathway is protein biosynthesis; polypeptide chain elongation. Involved in peptide bond synthesis. Stimulates efficient translation and peptide-bond synthesis on native or reconstituted 70S ribosomes in vitro. Probably functions indirectly by altering the affinity of the ribosome for aminoacyl-tRNA, thus increasing their reactivity as acceptors for peptidyl transferase. This chain is Elongation factor P, found in Shewanella halifaxensis (strain HAW-EB4).